The chain runs to 202 residues: uncharacterized protein (202 aa).

The disordered stretch occupies residues 164–202; the sequence is DTDSEQESDQESDQDSDQESEESDQESDQDSDQDSEGSE. Over residues 165–202 the composition is skewed to acidic residues; that stretch reads TDSEQESDQESDQDSDQESEESDQESDQDSDQDSEGSE.

This is an uncharacterized protein from Acanthamoeba polyphaga mimivirus (APMV).